The sequence spans 229 residues: Large ribosomal subunit protein uL1 (229 aa).

It belongs to the universal ribosomal protein uL1 family. As to quaternary structure, part of the 50S ribosomal subunit.

Its function is as follows. Binds directly to 23S rRNA. The L1 stalk is quite mobile in the ribosome, and is involved in E site tRNA release. In terms of biological role, protein L1 is also a translational repressor protein, it controls the translation of the L11 operon by binding to its mRNA. This is Large ribosomal subunit protein uL1 from Enterococcus faecalis (strain ATCC 700802 / V583).